The following is a 769-amino-acid chain: Non-secreted LysM effector LysM17 (769 aa).

Residues 173 to 193 form a helical membrane-spanning segment; it reads LPPLATAIPLAVVWASLASVI. N-linked (GlcNAc...) asparagine glycosylation is found at Asn-305, Asn-368, Asn-423, and Asn-452. LysM domains are found at residues 498-543 and 562-610; these read RTIQ…HVCC and YSNL…KICL. N-linked (GlcNAc...) asparagine glycans are attached at residues Asn-631, Asn-671, Asn-706, and Asn-734.

It belongs to the secreted LysM effector family.

The protein localises to the membrane. In terms of biological role, non-secreted LysM effector that might be involved in manipulation of host defenses for successful infection. The polypeptide is Non-secreted LysM effector LysM17 (Penicillium expansum (Blue mold rot fungus)).